The following is an 836-amino-acid chain: Pentatricopeptide repeat-containing protein At1g79490, mitochondrial (836 aa).

The transit peptide at 1–85 (MIRGRTAKVI…QCRSIVRRFC (85 aa)) directs the protein to the mitochondrion. 12 PPR repeats span residues 204–238 (SDEC…SSSH), 242–276 (SFNA…GCKI), 277–311 (DTQT…DSLL), 312–346 (DGST…KLRP), 347–381 (SFSV…GHRP), 382–416 (SATM…GFRP), 417–451 (NFGL…GFLP), 452–486 (TPST…GLRP), 487–521 (GLSS…GYSV), 528–555 (VLMI…GIKT), 556–590 (NNFI…AGKV), and 591–625 (DLVL…KHKA). The region spanning 710–786 (LDVRNLSVGA…APGELVMEWF (77 aa)) is the Smr domain.

Belongs to the PPR family. P subfamily.

The protein resides in the mitochondrion. The polypeptide is Pentatricopeptide repeat-containing protein At1g79490, mitochondrial (EMB2217) (Arabidopsis thaliana (Mouse-ear cress)).